Here is a 207-residue protein sequence, read N- to C-terminus: Outer-membrane lipoprotein LolB (207 aa).

An N-terminal signal peptide occupies residues 1 to 21 (MTLPDFRLIRLLPLASLVLTA). A lipid anchor (N-palmitoyl cysteine) is attached at Cys-22. Cys-22 is lipidated: S-diacylglycerol cysteine.

It belongs to the LolB family. As to quaternary structure, monomer.

The protein localises to the cell outer membrane. Plays a critical role in the incorporation of lipoproteins in the outer membrane after they are released by the LolA protein. The sequence is that of Outer-membrane lipoprotein LolB from Salmonella typhi.